The chain runs to 534 residues: CTP synthase (534 aa).

Residues 1 to 267 form an amidoligase domain region; the sequence is MTKYIFVTGG…DQIVCDHLKL (267 aa). Serine 13 is a CTP binding site. Serine 13 serves as a coordination point for UTP. 14–19 serves as a coordination point for ATP; sequence SIGKGI. Tyrosine 54 is an L-glutamine binding site. Aspartate 71 provides a ligand contact to ATP. Mg(2+) is bound by residues aspartate 71 and glutamate 141. Residues 148–150, 188–193, and lysine 224 each bind CTP; these read DIE and KTKPTQ. UTP is bound by residues 188-193 and lysine 224; that span reads KTKPTQ. The Glutamine amidotransferase type-1 domain maps to 292 to 534; it reads KIALVGKYVE…FVTAAVENMK (243 aa). Residue glycine 354 coordinates L-glutamine. Cysteine 381 acts as the Nucleophile; for glutamine hydrolysis in catalysis. Residues 382-385, glutamate 405, and arginine 463 each bind L-glutamine; that span reads LGMQ. Residues histidine 508 and glutamate 510 contribute to the active site.

This sequence belongs to the CTP synthase family. Homotetramer.

The enzyme catalyses UTP + L-glutamine + ATP + H2O = CTP + L-glutamate + ADP + phosphate + 2 H(+). It catalyses the reaction L-glutamine + H2O = L-glutamate + NH4(+). The catalysed reaction is UTP + NH4(+) + ATP = CTP + ADP + phosphate + 2 H(+). It functions in the pathway pyrimidine metabolism; CTP biosynthesis via de novo pathway; CTP from UDP: step 2/2. Its activity is regulated as follows. Allosterically activated by GTP, when glutamine is the substrate; GTP has no effect on the reaction when ammonia is the substrate. The allosteric effector GTP functions by stabilizing the protein conformation that binds the tetrahedral intermediate(s) formed during glutamine hydrolysis. Inhibited by the product CTP, via allosteric rather than competitive inhibition. Functionally, catalyzes the ATP-dependent amination of UTP to CTP with either L-glutamine or ammonia as the source of nitrogen. Regulates intracellular CTP levels through interactions with the four ribonucleotide triphosphates. This is CTP synthase from Streptococcus agalactiae serotype Ia (strain ATCC 27591 / A909 / CDC SS700).